The sequence spans 270 residues: Orotidine 5'-phosphate decarboxylase (270 aa).

Catalysis depends on Lys-89, which acts as the Proton donor.

Belongs to the OMP decarboxylase family. Type 2 subfamily.

The catalysed reaction is orotidine 5'-phosphate + H(+) = UMP + CO2. The protein operates within pyrimidine metabolism; UMP biosynthesis via de novo pathway; UMP from orotate: step 2/2. The sequence is that of Orotidine 5'-phosphate decarboxylase from Dehalococcoides mccartyi (strain CBDB1).